Reading from the N-terminus, the 557-residue chain is Large cysteine-rich periplasmic protein OmcB (557 aa).

The first 22 residues, 1–22 (MSKLIRRVVTVLALTSMASSFA), serve as a signal peptide directing secretion. A propeptide spanning residues 23–40 (SGKIEAAAAESLATRFIA) is cleaved from the precursor.

As to quaternary structure, part of a disulfide cross-linked outer membrane complex (COMC) composed of the major outer membrane porin (MOMP), the small cysteine-rich protein (OmcA) and the large cysteine-rich periplasmic protein (OmcB).

The protein localises to the periplasm. In terms of biological role, in elementary bodies (EBs, the infectious stage, which is able to survive outside the host cell) provides the structural integrity of the outer envelope through disulfide cross-links with the small cysteine-rich protein and the major outer membrane porin. It has been described in publications as the Sarkosyl-insoluble COMC (Chlamydia outer membrane complex), and serves as the functional equivalent of peptidoglycan. It is present but the disulfide bonds are reduced in reticulate bodies (RBs). The polypeptide is Large cysteine-rich periplasmic protein OmcB (omcB) (Chlamydia abortus (strain DSM 27085 / S26/3) (Chlamydophila abortus)).